The primary structure comprises 58 residues: Large ribosomal subunit protein uL30 (58 aa).

It belongs to the universal ribosomal protein uL30 family. Part of the 50S ribosomal subunit.

This Parabacteroides distasonis (strain ATCC 8503 / DSM 20701 / CIP 104284 / JCM 5825 / NCTC 11152) protein is Large ribosomal subunit protein uL30.